Reading from the N-terminus, the 213-residue chain is Orotate phosphoribosyltransferase (213 aa).

Lys-26 lines the 5-phospho-alpha-D-ribose 1-diphosphate pocket. 34 to 35 (FF) contacts orotate. Residues 72-73 (YK), Arg-99, Lys-100, Lys-103, His-105, and 124-132 (DDVITAGTA) each bind 5-phospho-alpha-D-ribose 1-diphosphate. 2 residues coordinate orotate: Thr-128 and Arg-156.

This sequence belongs to the purine/pyrimidine phosphoribosyltransferase family. PyrE subfamily. In terms of assembly, homodimer. The cofactor is Mg(2+).

It carries out the reaction orotidine 5'-phosphate + diphosphate = orotate + 5-phospho-alpha-D-ribose 1-diphosphate. Its pathway is pyrimidine metabolism; UMP biosynthesis via de novo pathway; UMP from orotate: step 1/2. Its function is as follows. Catalyzes the transfer of a ribosyl phosphate group from 5-phosphoribose 1-diphosphate to orotate, leading to the formation of orotidine monophosphate (OMP). The polypeptide is Orotate phosphoribosyltransferase (Vibrio atlanticus (strain LGP32) (Vibrio splendidus (strain Mel32))).